Consider the following 260-residue polypeptide: UPF0246 protein BTH_I1090 (260 aa).

The protein belongs to the UPF0246 family.

The protein is UPF0246 protein BTH_I1090 of Burkholderia thailandensis (strain ATCC 700388 / DSM 13276 / CCUG 48851 / CIP 106301 / E264).